We begin with the raw amino-acid sequence, 257 residues long: MKKIIEVNNVSYHYDKEHALENIHFQVAKGSFTGLIGPNGSGKSTMLKLILGVLKKQQGSISLFGEKQADFKDWVKIGFVSQKSNAFNSAFPATVKEVVASGLTKKKGLFKTLNNKDKEDIDYALKRVEMTDYLHRNIGELSGGQQQRVFIARALVSRPELLILDEPTVGVDVENVKAFYELLAELNRTEEMTLLLVTHDLMAVNTYVNHVISINKRIIFDGSAHEYQHYLADRELEILAEQRRREDACLDCDASPV.

One can recognise an ABC transporter domain in the interval 5 to 241 (IEVNNVSYHY…ADRELEILAE (237 aa)). 37 to 44 (GPNGSGKS) contributes to the ATP binding site.

This sequence belongs to the ABC transporter superfamily.

Its function is as follows. Involved in a zinc uptake transport system. This Listeria monocytogenes serovar 1/2a (strain ATCC BAA-679 / EGD-e) protein is Zinc uptake system ATP-binding protein ZurA (zurA).